A 176-amino-acid polypeptide reads, in one-letter code: Inorganic pyrophosphatase (176 aa).

Positions 30, 44, and 56 each coordinate substrate. Mg(2+) is bound by residues aspartate 66, aspartate 71, and aspartate 103. Residue tyrosine 142 participates in substrate binding.

Belongs to the PPase family. As to quaternary structure, homohexamer. Mg(2+) is required as a cofactor.

Its subcellular location is the cytoplasm. It catalyses the reaction diphosphate + H2O = 2 phosphate + H(+). Its function is as follows. Catalyzes the hydrolysis of inorganic pyrophosphate (PPi) forming two phosphate ions. The sequence is that of Inorganic pyrophosphatase from Vibrio vulnificus (strain CMCP6).